The chain runs to 171 residues: 3-hydroxydecanoyl-[acyl-carrier-protein] dehydratase (171 aa).

Histidine 70 is a catalytic residue.

It belongs to the thioester dehydratase family. FabA subfamily. In terms of assembly, homodimer.

It is found in the cytoplasm. It catalyses the reaction a (3R)-hydroxyacyl-[ACP] = a (2E)-enoyl-[ACP] + H2O. The catalysed reaction is (3R)-hydroxydecanoyl-[ACP] = (2E)-decenoyl-[ACP] + H2O. The enzyme catalyses (2E)-decenoyl-[ACP] = (3Z)-decenoyl-[ACP]. It participates in lipid metabolism; fatty acid biosynthesis. Functionally, necessary for the introduction of cis unsaturation into fatty acids. Catalyzes the dehydration of (3R)-3-hydroxydecanoyl-ACP to E-(2)-decenoyl-ACP and then its isomerization to Z-(3)-decenoyl-ACP. Can catalyze the dehydratase reaction for beta-hydroxyacyl-ACPs with saturated chain lengths up to 16:0, being most active on intermediate chain length. This is 3-hydroxydecanoyl-[acyl-carrier-protein] dehydratase from Pseudomonas fluorescens (strain ATCC BAA-477 / NRRL B-23932 / Pf-5).